Consider the following 94-residue polypeptide: Probable Fe(2+)-trafficking protein (94 aa).

It belongs to the Fe(2+)-trafficking protein family.

Its function is as follows. Could be a mediator in iron transactions between iron acquisition and iron-requiring processes, such as synthesis and/or repair of Fe-S clusters in biosynthetic enzymes. In Alcanivorax borkumensis (strain ATCC 700651 / DSM 11573 / NCIMB 13689 / SK2), this protein is Probable Fe(2+)-trafficking protein.